The chain runs to 326 residues: ELAV-like protein 1-B (326 aa).

RRM domains lie at 20-98 (TNLI…FARP), 106-186 (ANLY…FAAN), and 244-322 (WCIF…FKTS).

Belongs to the RRM elav family. As to quaternary structure, interacts (via RRM3) with cirbp. Unable to form oligomers. Part of a ribonucleoprotein (RNP) complex, at least composed of elavl1/elrA and/or elavl2/elrB, igf2bp3/vg1RBP, ddx6/Xp54, ybx2/frgy2, lsm14b/rap55b and, in a subset of RNP complexes, stau1/staufen.

The protein localises to the cytoplasm. It localises to the cell cortex. Its function is as follows. RNA-binding protein that binds to the 3'-UTR region of mRNAs and increases their stability. Involved in embryonic stem cells (ESCs) differentiation: preferentially binds mRNAs that are not methylated by N6-methyladenosine (m6A), stabilizing them, promoting ESCs differentiation. Binds to poly-U elements and AU-rich elements (AREs) in the 3'-UTR of target mRNAs. Acts cooperatively with cribp to stabilize AU-rich sequence (ARE)-containing mRNAs. May play a role during gastrulation. Required for the vegetal localization of vg1 mRNA. This chain is ELAV-like protein 1-B (elavl1-b), found in Xenopus laevis (African clawed frog).